The sequence spans 202 residues: Probable chemoreceptor glutamine deamidase CheD (202 aa).

Belongs to the CheD family.

The catalysed reaction is L-glutaminyl-[protein] + H2O = L-glutamyl-[protein] + NH4(+). Its function is as follows. Probably deamidates glutamine residues to glutamate on methyl-accepting chemotaxis receptors (MCPs), playing an important role in chemotaxis. This is Probable chemoreceptor glutamine deamidase CheD from Thiobacillus denitrificans (strain ATCC 25259 / T1).